The primary structure comprises 578 residues: Arginine--tRNA ligase (578 aa).

Residues 127–137 (PNLAKEMHVGH) carry the 'HIGH' region motif.

This sequence belongs to the class-I aminoacyl-tRNA synthetase family. Monomer.

The protein localises to the cytoplasm. It catalyses the reaction tRNA(Arg) + L-arginine + ATP = L-arginyl-tRNA(Arg) + AMP + diphosphate. In Pseudomonas fluorescens (strain SBW25), this protein is Arginine--tRNA ligase.